We begin with the raw amino-acid sequence, 462 residues long: Argininosuccinate lyase (462 aa).

Belongs to the lyase 1 family. Argininosuccinate lyase subfamily.

The protein resides in the cytoplasm. The enzyme catalyses 2-(N(omega)-L-arginino)succinate = fumarate + L-arginine. It participates in amino-acid biosynthesis; L-arginine biosynthesis; L-arginine from L-ornithine and carbamoyl phosphate: step 3/3. The protein is Argininosuccinate lyase of Caldicellulosiruptor saccharolyticus (strain ATCC 43494 / DSM 8903 / Tp8T 6331).